The primary structure comprises 456 residues: Cell cycle checkpoint control protein Rad9 (456 aa).

The Nuclear localization signal motif lies at 300–302 (KRK).

It belongs to the rad9 family. In terms of assembly, component of the 9-1-1 checkpoint clamp complex consisting of Rad9 isoform A, Rad1 and Hus1-like; the interaction with Hus1-like is direct. Does not interact directly with Rad1; this interaction is probably mediated by Hus1-like. This complex probably also forms with Rad9 isoform B, however 9-1-1 complex containing Rad9 isoform A localizes to the nuclear periphery. Interacts with Brca2. In terms of tissue distribution, expressed in ovary.

It is found in the nucleus envelope. It localises to the nucleus. Component of the Rad9-Rad1-Hus1 (9-1-1) checkpoint clamp complex. Functionally, targets the 9-1-1 complex to the nuclear periphery. Targeting to the nuclear periphery is disrupted in the presence of persistent double stranded break DNA damage, possibly as a function of the meiotic checkpoint. This is Cell cycle checkpoint control protein Rad9 from Drosophila melanogaster (Fruit fly).